The chain runs to 291 residues: 33 kDa chaperonin (291 aa).

Cystine bridges form between Cys235/Cys237 and Cys268/Cys271.

This sequence belongs to the HSP33 family. Post-translationally, under oxidizing conditions two disulfide bonds are formed involving the reactive cysteines. Under reducing conditions zinc is bound to the reactive cysteines and the protein is inactive.

The protein resides in the cytoplasm. In terms of biological role, redox regulated molecular chaperone. Protects both thermally unfolding and oxidatively damaged proteins from irreversible aggregation. Plays an important role in the bacterial defense system toward oxidative stress. This chain is 33 kDa chaperonin, found in Streptococcus agalactiae serotype Ia (strain ATCC 27591 / A909 / CDC SS700).